A 284-amino-acid polypeptide reads, in one-letter code: Bifunctional protein FolD (284 aa).

Residues 165–167 and Ser-190 each bind NADP(+); that span reads GRS.

This sequence belongs to the tetrahydrofolate dehydrogenase/cyclohydrolase family. As to quaternary structure, homodimer.

It catalyses the reaction (6R)-5,10-methylene-5,6,7,8-tetrahydrofolate + NADP(+) = (6R)-5,10-methenyltetrahydrofolate + NADPH. It carries out the reaction (6R)-5,10-methenyltetrahydrofolate + H2O = (6R)-10-formyltetrahydrofolate + H(+). The protein operates within one-carbon metabolism; tetrahydrofolate interconversion. In terms of biological role, catalyzes the oxidation of 5,10-methylenetetrahydrofolate to 5,10-methenyltetrahydrofolate and then the hydrolysis of 5,10-methenyltetrahydrofolate to 10-formyltetrahydrofolate. This is Bifunctional protein FolD from Streptococcus pyogenes serotype M2 (strain MGAS10270).